The primary structure comprises 477 residues: MAQRYDELPHYGGMDGVGVPASMYGDPHAPRPIPPVHHLNHGPPLHATQHYGAHAPHPNVMPASMGSAVNDALKRDKDAIYGHPLFPLLALVFEKCELATCTPREPGVAGGDVCSSDSFNEDIAVFAKQVRAEKPLFSSNPELDNLMIQAIQVLRFHLLELEKVHELCDNFCHRYISCLKGKMPIDLVIDERDGSSKSDHEELSGSSTNLADHNPSSWRDHDDATSTHSAGTPGPSSGGHASQSGDNSSEQGDGLDNSVASPGTGDDDDPDKDKKRQKKRGIFPKVATNIMRAWLFQHLTHPYPSEEQKKQLAQDTGLTILQVNNWFINARRRIVQPMIDQSNRAGFLLDPSVSQGAAYSPEGQPMGSFVLDGQQHMGIRPAGLQSMPGDYVSQGGPMGMSMAQPSYTPPQMTPHPTQLRHGPPMHSYLPSHPHHPAMMMHGGPPTHPGMTMSAQSPTMLNSVDPNVGGQVMDIHAQ.

The required for interaction with PBX1 stretch occupies residues 71-191; the sequence is DALKRDKDAI…KMPIDLVIDE (121 aa). In terms of domain architecture, MEIS N-terminal spans 110–193; the sequence is GGDVCSSDSF…PIDLVIDERD (84 aa). The segment covering 193-203 has biased composition (basic and acidic residues); it reads DGSSKSDHEEL. A disordered region spans residues 193–283; it reads DGSSKSDHEE…KKRQKKRGIF (91 aa). 2 stretches are compositionally biased toward polar residues: residues 204–217 and 239–251; these read SGSSTNLADHNPSS and GHASQSGDNSSEQ. Residues 276–338 constitute a DNA-binding region (homeobox; TALE-type); sequence RQKKRGIFPK…NARRRIVQPM (63 aa). The interaction with DNA stretch occupies residues 299–333; it reads LTHPYPSEEQKKQLAQDTGLTILQVNNWFINARRR. Positions 340–477 are transcriptional activation domain; it reads DQSNRAGFLL…GGQVMDIHAQ (138 aa).

Belongs to the TALE/MEIS homeobox family. In terms of assembly, monomer and homodimer. Heterodimer with HOXB13. Isoform 2 interacts with TLX1. Isoform 3 interacts with HOXA13 and PBX1 isoform PBX1b. Isoform 4 interacts with SP1, SP3 and KLF4. Isoform 4 and isoform 5 interact with PBX1 isoform PBX1a; the interaction partially relieves MEIS2 autoinhibition. Isoform 3 also known as MEIS2b is part of a PDX1:PBX1b:Meis2B complex; Meis2B is recruited by PBX1b and can be replaced by isoform 4 in a small fraction of complexes. Can form trimeric complexes including HOXB8 and PBX2 or PBX3. In terms of tissue distribution, expressed in various tissues. Expressed at high level in the lymphoid organs of hematopoietic tissues. Also expressed in some regions of the brain, such as the putamen.

The protein localises to the nucleus. It localises to the cytoplasm. It is found in the perinuclear region. Its function is as follows. Involved in transcriptional regulation. Binds to HOX or PBX proteins to form dimers, or to a DNA-bound dimer of PBX and HOX proteins and thought to have a role in stabilization of the homeoprotein-DNA complex. Isoform 3 is required for the activity of a PDX1:PBX1b:MEIS2b complex in pancreatic acinar cells involved in the transcriptional activation of the ELA1 enhancer; the complex binds to the enhancer B element and cooperates with the transcription factor 1 complex (PTF1) bound to the enhancer A element; MEIS2 is not involved in complex DNA-binding. Probably in complex with PBX1, is involved in transcriptional regulation by KLF4. Isoform 3 and isoform 4 can bind to a EPHA8 promoter sequence containing the DNA motif 5'-CGGTCA-3'; in cooperation with a PBX protein (such as PBX2) is proposed to be involved in the transcriptional activation of EPHA8 in the developing midbrain. May be involved in regulation of myeloid differentiation. Can bind to the DNA sequence 5'-TGACAG-3'in the activator ACT sequence of the D(1A) dopamine receptor (DRD1) promoter and activate DRD1 transcription; isoform 5 cannot activate DRD1 transcription. This Homo sapiens (Human) protein is Homeobox protein Meis2 (MEIS2).